The primary structure comprises 261 residues: Kallikrein-1E2 (261 aa).

Positions 1 to 17 (MWFLVLCLDLSLGETGA) are cleaved as a signal peptide. Residues 18 to 24 (LPPIQSR) constitute a propeptide, activation peptide. The Peptidase S1 domain maps to 25-258 (IIGGWECEKH…HLKWIKETIE (234 aa)). 5 cysteine pairs are disulfide-bonded: C31–C173, C50–C66, C152–C219, C184–C198, and C209–C234. H65 serves as the catalytic Charge relay system. The N-linked (GlcNAc...) asparagine glycan is linked to N79. D120 functions as the Charge relay system in the catalytic mechanism. Catalysis depends on S213, which acts as the Charge relay system.

It belongs to the peptidase S1 family. Kallikrein subfamily. As to expression, detected in prostate and semen.

It localises to the secreted. The catalysed reaction is Preferential cleavage of Arg-|-Xaa bonds in small molecule substrates. Highly selective action to release kallidin (lysyl-bradykinin) from kininogen involves hydrolysis of Met-|-Xaa or Leu-|-Xaa.. Glandular kallikreins cleave Met-Lys and Arg-Ser bonds in kininogen to release Lys-bradykinin. The polypeptide is Kallikrein-1E2 (KLK1E2) (Equus caballus (Horse)).